A 279-amino-acid polypeptide reads, in one-letter code: Hydroxyethylthiazole kinase (279 aa).

Position 58 (methionine 58) interacts with substrate. ATP-binding residues include lysine 134 and threonine 180. Position 207 (glycine 207) interacts with substrate.

The protein belongs to the Thz kinase family. It depends on Mg(2+) as a cofactor.

It catalyses the reaction 5-(2-hydroxyethyl)-4-methylthiazole + ATP = 4-methyl-5-(2-phosphooxyethyl)-thiazole + ADP + H(+). It participates in cofactor biosynthesis; thiamine diphosphate biosynthesis; 4-methyl-5-(2-phosphoethyl)-thiazole from 5-(2-hydroxyethyl)-4-methylthiazole: step 1/1. Functionally, catalyzes the phosphorylation of the hydroxyl group of 4-methyl-5-beta-hydroxyethylthiazole (THZ). The chain is Hydroxyethylthiazole kinase from Methanoculleus marisnigri (strain ATCC 35101 / DSM 1498 / JR1).